The sequence spans 747 residues: Elongation factor G, mitochondrial (747 aa).

A mitochondrion-targeting transit peptide spans 1 to 32 (MTLITRVLNSNLPLRLSALKTVRQLQCGYSSH). One can recognise a tr-type G domain in the interval 42 to 319 (ERIRNIGISA…AIIDYLPNPG (278 aa)). Residues 51-58 (AHIDSGKT), 118-122 (DTPGH), and 172-175 (NKLD) each bind GTP.

It belongs to the TRAFAC class translation factor GTPase superfamily. Classic translation factor GTPase family. EF-G/EF-2 subfamily.

The protein localises to the mitochondrion. It functions in the pathway protein biosynthesis; polypeptide chain elongation. Functionally, mitochondrial GTPase that catalyzes the GTP-dependent ribosomal translocation step during translation elongation. During this step, the ribosome changes from the pre-translocational (PRE) to the post-translocational (POST) state as the newly formed A-site-bound peptidyl-tRNA and P-site-bound deacylated tRNA move to the P and E sites, respectively. Catalyzes the coordinated movement of the two tRNA molecules, the mRNA and conformational changes in the ribosome. Essential during development as it acts as a retrograde signal from mitochondria to the nucleus to slow down cell proliferation if mitochondrial energy output is low. This chain is Elongation factor G, mitochondrial, found in Drosophila virilis (Fruit fly).